We begin with the raw amino-acid sequence, 324 residues long: Holliday junction branch migration complex subunit RuvB (324 aa).

The large ATPase domain (RuvB-L) stretch occupies residues 1–168 (MEDLALRPKT…FGIVEHLEYY (168 aa)). ATP contacts are provided by residues Leu6, Arg7, Gly48, Lys51, Thr52, Thr53, 115 to 117 (EDF), Arg158, Tyr168, and Arg205. Residue Thr52 participates in Mg(2+) binding. The segment at 169 to 239 (TPEELAQGVM…RALEALAALG (71 aa)) is small ATPAse domain (RuvB-S). The tract at residues 242 to 324 (ELGLEKRDRE…PPPVGPLLEP (83 aa)) is head domain (RuvB-H). 2 residues coordinate DNA: Arg297 and Arg302.

The protein belongs to the RuvB family. In terms of assembly, homohexamer. Forms an RuvA(8)-RuvB(12)-Holliday junction (HJ) complex. HJ DNA is sandwiched between 2 RuvA tetramers; dsDNA enters through RuvA and exits via RuvB. An RuvB hexamer assembles on each DNA strand where it exits the tetramer. Each RuvB hexamer is contacted by two RuvA subunits (via domain III) on 2 adjacent RuvB subunits; this complex drives branch migration. In the full resolvosome a probable DNA-RuvA(4)-RuvB(12)-RuvC(2) complex forms which resolves the HJ.

Its subcellular location is the cytoplasm. The enzyme catalyses ATP + H2O = ADP + phosphate + H(+). With respect to regulation, the ATPase activity of RuvB is enhanced by RuvA. Its function is as follows. The RuvA-RuvB-RuvC complex processes Holliday junction (HJ) DNA during genetic recombination and DNA repair, while the RuvA-RuvB complex plays an important role in the rescue of blocked DNA replication forks via replication fork reversal (RFR). RuvA specifically binds to HJ cruciform DNA, conferring on it an open structure. The RuvB hexamer acts as an ATP-dependent pump, pulling dsDNA into and through the RuvAB complex. RuvB forms 2 homohexamers on either side of HJ DNA bound by 1 or 2 RuvA tetramers; 4 subunits per hexamer contact DNA at a time. Coordinated motions by a converter formed by DNA-disengaged RuvB subunits stimulates ATP hydrolysis and nucleotide exchange. Immobilization of the converter enables RuvB to convert the ATP-contained energy into a lever motion, pulling 2 nucleotides of DNA out of the RuvA tetramer per ATP hydrolyzed, thus driving DNA branch migration. The RuvB motors rotate together with the DNA substrate, which together with the progressing nucleotide cycle form the mechanistic basis for DNA recombination by continuous HJ branch migration. Branch migration allows RuvC to scan DNA until it finds its consensus sequence, where it cleaves and resolves cruciform DNA. In terms of biological role, has Mg(2+)-, DNA-dependent ATPase activity; dsDNA and supercoiled DNA but not ssDNA stimulate activity. Binds to linear dsDNA in the absence of ATP or ATP-gamma-S. This subunit can promote Holliday junction migration alone in vitro. Partially complements an E.coli deletion for UV sensitivity. This is Holliday junction branch migration complex subunit RuvB from Thermus thermophilus.